The primary structure comprises 260 residues: Intermembrane phospholipid transport system permease protein MlaE (260 aa).

At 1 to 50 (MLLNALASLGHKGIKTLRTFGRAGLMLFNALVGKPEFRKHAPLLVRQLYN) the chain is on the cytoplasmic side. The chain crosses the membrane as a helical span at residues 51 to 71 (VGVLSMLIIVVSGVFIGMVLG). The Periplasmic portion of the chain corresponds to 72–88 (LQGYLVLTTYSAETSLG). A helical membrane pass occupies residues 89 to 109 (MLVALSLLRELGPVVAALLFA). The Cytoplasmic portion of the chain corresponds to 110–147 (GRAGSALTAEIGLMRATEQLSSMEMMAVDPLRRVISPR). A helical transmembrane segment spans residues 148–168 (FWAGVISLPLLTVIFVAVGIW). The Periplasmic segment spans residues 169-198 (GGSLVGVSWKGIDSGFFWSAMQNAVDWRMD). The helical transmembrane segment at 199–219 (LVNCLIKSVVFAITVTWISLF) threads the bilayer. Topologically, residues 220–238 (NGYDAIPTSAGISRATTRT) are cytoplasmic. A helical membrane pass occupies residues 239–259 (VVHSSLAVLGLDFVLTALMFG). A topological domain (periplasmic) is located at residue Asn260.

It belongs to the MlaE permease family. In terms of assembly, the complex is composed of two ATP-binding proteins (MlaF), two transmembrane proteins (MlaE), two cytoplasmic solute-binding proteins (MlaB) and six periplasmic solute-binding proteins (MlaD).

It localises to the cell inner membrane. Functionally, part of the ABC transporter complex MlaFEDB, which is involved in a phospholipid transport pathway that maintains lipid asymmetry in the outer membrane by retrograde trafficking of phospholipids from the outer membrane to the inner membrane. Probably responsible for the translocation of the substrate across the membrane. In Escherichia coli O157:H7, this protein is Intermembrane phospholipid transport system permease protein MlaE.